Reading from the N-terminus, the 496-residue chain is Putative BTB/POZ domain and WD-repeat protein R61 (496 aa).

The BTB domain occupies 8–78 (SNINLILNDE…MFSDIDIYKN (71 aa)). WD repeat units follow at residues 149-189 (KFPR…FNSK), 208-248 (IFDN…KEFQ), 250-285 (DYKINDICFSPDGKSCVCANKFLSIYDLDNGRRKVL), 291-330 (KSIGCIKTCVCWTSDNIIACGDSDGVIEFWNAETNLIIKW), 333-371 (VSKSRISNISFSPDRSQIAVSNQTKIILYDSIFDKKILE), and 422-464 (MYFS…DIIY).

The protein belongs to the mimivirus BTB/WD family.

This is Putative BTB/POZ domain and WD-repeat protein R61 from Acanthamoeba polyphaga (Amoeba).